Reading from the N-terminus, the 193-residue chain is Acyl carrier protein phosphodiesterase (193 aa).

Belongs to the AcpH family.

The enzyme catalyses holo-[ACP] + H2O = apo-[ACP] + (R)-4'-phosphopantetheine + H(+). Its function is as follows. Converts holo-ACP to apo-ACP by hydrolytic cleavage of the phosphopantetheine prosthetic group from ACP. The sequence is that of Acyl carrier protein phosphodiesterase from Shigella boydii serotype 4 (strain Sb227).